The following is a 111-amino-acid chain: MRSPLPPMPDPEAFPPGAVSVDAGGITLTVWAQPRASCSEVVGWQQNAFKVRLAAPPVEGKANAECVALIAAFFGVPRRQVSLVQGQQGRHKKIRIEAPADLLLVALQKLS.

Belongs to the UPF0235 family.

The protein is UPF0235 protein glr3835 of Gloeobacter violaceus (strain ATCC 29082 / PCC 7421).